Consider the following 359-residue polypeptide: tRNA-specific 2-thiouridylase MnmA (359 aa).

Residues glycine 9–serine 16 and methionine 35 contribute to the ATP site. Cysteine 105 acts as the Nucleophile in catalysis. Cysteines 105 and 203 form a disulfide. Glycine 129 is an ATP binding site. The tract at residues lysine 153–glutamine 155 is interaction with tRNA. Catalysis depends on cysteine 203, which acts as the Cysteine persulfide intermediate. Residues arginine 309–tyrosine 310 form an interaction with tRNA region.

The protein belongs to the MnmA/TRMU family.

Its subcellular location is the cytoplasm. It catalyses the reaction S-sulfanyl-L-cysteinyl-[protein] + uridine(34) in tRNA + AH2 + ATP = 2-thiouridine(34) in tRNA + L-cysteinyl-[protein] + A + AMP + diphosphate + H(+). In terms of biological role, catalyzes the 2-thiolation of uridine at the wobble position (U34) of tRNA, leading to the formation of s(2)U34. In Acetivibrio thermocellus (strain ATCC 27405 / DSM 1237 / JCM 9322 / NBRC 103400 / NCIMB 10682 / NRRL B-4536 / VPI 7372) (Clostridium thermocellum), this protein is tRNA-specific 2-thiouridylase MnmA.